A 238-amino-acid chain; its full sequence is Probable transcriptional regulatory protein SZO_02930 (238 aa).

The protein belongs to the TACO1 family. YeeN subfamily.

It localises to the cytoplasm. The chain is Probable transcriptional regulatory protein SZO_02930 from Streptococcus equi subsp. zooepidemicus (strain H70).